Here is a 468-residue protein sequence, read N- to C-terminus: MSTTTKKSLESKLQQLKCHFTWNLMAGDESLDEFEDKVFNKDEFQKRECKATMCNILAFVKHRRGQNASALKELEKAEQFIQQQHPDHVEIRNIVTWGNYAWVYYHMGQLEKAQAYLDKVRQVCEKFSSPYRIESPELDCEEGWARLKCTRNQNERVKVCFEKALEKDPKNPEFTSGWAISNYRLDFWPAQQNAVDSLKQAIRMSPNSPYVKVLLALKLEMNQENQGKELVEEALREAPGETDVLRSAARFYYKTHDKDRAIQLLSQALELLPNNAYVYYYIGCFYRSKVLQIDSRRETSQNENREQLLKQAIYYLKKAEETKEMIKDSCSYLAHLYVLAEQYKEADYYFQKGFKKELTPGLKQLLHLRYGNFQFFQMKCEDKAIHQYLEGVKIRQKTKPKEKMTNKLRFIAERRRSQNGFDSKALHILAFLQELNKESQQAAKVSERGQDSERPVFSPSLHEGGNEQ.

Residue S2 is modified to N-acetylserine. 9 TPR repeats span residues 51–89 (ATMC…PDHV), 90–135 (EIRN…RIES), 136–171 (PELD…DPKN), 172–208 (PEFT…SPNS), 242–275 (TDVL…LPNN), 276–328 (AYVY…MIKD), 329–359 (SCSY…KELT), 360–398 (PGLK…RQKT), and 399–441 (KPKE…ESQQ). The disordered stretch occupies residues 441 to 468 (QAAKVSERGQDSERPVFSPSLHEGGNEQ). A compositionally biased stretch (basic and acidic residues) spans 445–454 (VSERGQDSER).

It belongs to the IFIT family. As to quaternary structure, domain-swapped homodimer. Component of an interferon-dependent multiprotein complex, at least composed of IFIT1, IFIT2 and IFIT3. Interacts with IFIT1 and IFIT3. Interacts with STING1/MITA and disrupts its interaction with MAVS or TBK1. Interacts with EIF3E and EIF3C.

The protein localises to the cytoplasm. It localises to the endoplasmic reticulum. In terms of biological role, IFN-induced antiviral protein which inhibits expression of viral messenger RNAs lacking 2'-O-methylation of the 5' cap. The ribose 2'-O-methylation would provide a molecular signature to distinguish between self and non-self mRNAs by the host during viral infection. Viruses evolved several ways to evade this restriction system such as encoding their own 2'-O-methylase for their mRNAs or by stealing host cap containing the 2'-O-methylation (cap snatching mechanism). Binds AU-rich viral RNAs, with or without 5' triphosphorylation, RNA-binding is required for antiviral activity. Can promote apoptosis. The chain is Interferon-induced protein with tetratricopeptide repeats 2 (IFIT2) from Cricetulus griseus (Chinese hamster).